A 240-amino-acid chain; its full sequence is Pyridoxine 5'-phosphate synthase (240 aa).

Asparagine 7 is a binding site for 3-amino-2-oxopropyl phosphate. Residue 9 to 10 participates in 1-deoxy-D-xylulose 5-phosphate binding; that stretch reads DH. Arginine 18 is a 3-amino-2-oxopropyl phosphate binding site. Residue histidine 43 is the Proton acceptor of the active site. Residues arginine 45 and histidine 50 each contribute to the 1-deoxy-D-xylulose 5-phosphate site. Glutamate 70 functions as the Proton acceptor in the catalytic mechanism. Threonine 100 serves as a coordination point for 1-deoxy-D-xylulose 5-phosphate. Histidine 191 functions as the Proton donor in the catalytic mechanism. Residues glycine 192 and 213 to 214 each bind 3-amino-2-oxopropyl phosphate; that span reads GH.

It belongs to the PNP synthase family. Homooctamer; tetramer of dimers.

The protein localises to the cytoplasm. The catalysed reaction is 3-amino-2-oxopropyl phosphate + 1-deoxy-D-xylulose 5-phosphate = pyridoxine 5'-phosphate + phosphate + 2 H2O + H(+). The protein operates within cofactor biosynthesis; pyridoxine 5'-phosphate biosynthesis; pyridoxine 5'-phosphate from D-erythrose 4-phosphate: step 5/5. Its function is as follows. Catalyzes the complicated ring closure reaction between the two acyclic compounds 1-deoxy-D-xylulose-5-phosphate (DXP) and 3-amino-2-oxopropyl phosphate (1-amino-acetone-3-phosphate or AAP) to form pyridoxine 5'-phosphate (PNP) and inorganic phosphate. This is Pyridoxine 5'-phosphate synthase from Acaryochloris marina (strain MBIC 11017).